A 1606-amino-acid chain; its full sequence is MHPDVEQELAYTLLIELMAHQFAYPVRWIETQDHILGEVNAERIIEIGPSPILTNMMKRTIASRFSNSDQALNINRHLMSPDNGNPDIYYKYEPTEEPDLPELGSQSNTVKVSGSPAWEVQRPVTASHIPSGPVDEIEDTKVPVSAILISLLAPKLKKDPRAIPMTGTISNLVGGRSTLSNEIVGDLLAEFPNRVPDKPEEMPLSSLSETLSTSHDGQLGKATSALVMKMVSSRLPGGYSLSNARLYLREKWGLPPRRQDAVFLLALQRQPTSRLLSSTDVDSFLDANAAAYFGQENLSIPSRGSVQSAAPAVDAKALLLAKQQNDALLRDIMGVIQGHTAAKNESQDATLQASDSEAAATKKLDMWISEHGDDYAKGMAPIFDAKKQRIYDSYWNWNAQDTILLFQRKLQGQMSSVKELEQLSTSIVNRACGRTLEQLDYIIAQAERDPTVDSGLLKPMQLLRQTCVETQERQPVFINLSPDMAPLTTISSDGRLIFSEIPRALPCSKILSTNEASSIAFPVSRADGVAVSYSPQLTEILCHDLKDSRRSGFSFSGKNVLLTGAGEGSIGNHILRHLLAGGARVTVTTSSFSEKVTAMFQSIYARHGSKGSVLRVVPFNQGSHGDVQNLVKYIYADASWDLDFILPFAAISENGRDIEDLDSKSEIAHRAMLTNLVRLVGAVASQKRQRDTITRPATVVLPLSPNHGLLGNDGLYSESKRSLETLIPKWSSETWGSYIALAGVIIGWTRGTGLMDSNDVIAQAVESLGVRTFSAVEMAANIVSVMGGRFNAECQETPIIVDMGGGLGSVKNFKAKLTSARQELNAYAELKRLTAQESSRDKAYVATDAHAKTSKRLRGRANILLPLPKNLNYEVDIAPFAASLDGMVDLSRVVVITGFAELGPLGNSRTRWEMEESGTLSLEGCVEMAWLMGLITYHNGIDKKGDHYSGWVDTKTSDAICDDEIPGKYLEFMAKHSGIREVEPEISDNGYDPSKKESLIEVALQRDLAPFETSIETAETLKRQHGDKAIVTQDASSGNCQVQLKAGAVVMVPRASRFNRTVAGQIPLGWTAKRYGISDDIIEQVDPVTLFSLVCTVEALLCSGIIDPYEFYQHIHVSQFANCLGSSMGGLTSLRKMHRDRYLDRSVKSDLVQETFINTTGAWINMLLSSSSGPIRTPVGACASSLESLDTACDLIMLKKAKVCLVGGFEDFVEDLSYEFGCMKATCDTDAEYAAGRVPKEMSRPTASSRSGFVESQGCGVQVLTSAELALEMGLPIFGIVAYTSMAADKAGRSVPAPGKGVLTNAREKSTIPNPMLSLGYRKRLLELRRTQIYQNISDHLDILNSEIALFQESETASPGDLKAFRENRELRIRQDAQAQDAEVTFSLGNQFWKSQDAGDISPIRGSLAVWGLGIDDISVASLHGTSTVQNDLNETMVIQEQMKHLGRRQGNLLPCVCQKWLTGHSKGAAGAWMVNGCLQMMNTGLVPGNRNADNVDEKLREHRHLAFPNTNLQMDDIKACSVTSFGFGQKGGQALLVHPRYLFATIGRERYDGYISKRDKRWRKACFRLSEAMVQGNMVSKCIKTEAPYTSADGVAALLDPTARF.

One can recognise a Carrier domain in the interval 142–218; sequence VPVSAILISL…ETLSTSHDGQ (77 aa). S177 is modified (O-(pantetheine 4'-phosphoryl)serine). A Ketosynthase family 3 (KS3) domain is found at 996–1539; it reads KESLIEVALQ…QKGGQALLVH (544 aa). Active-site for beta-ketoacyl synthase activity residues include C1182, H1424, and H1465.

Belongs to the thiolase-like superfamily. Fungal fatty acid synthetase subunit alpha family.

It catalyses the reaction a fatty acyl-[ACP] + malonyl-[ACP] + H(+) = a 3-oxoacyl-[ACP] + holo-[ACP] + CO2. The protein operates within secondary metabolite biosynthesis. Fatty acid synthase; part of the gene cluster that mediates the biosynthesis of the cyclic tetrapeptide apicidin F (APF). The non-ribosomal peptide synthetase apf1 incorporates four different amino acids to produce apicidin F: L-phenylalanine, D-pipecolic acid (D-pip), N-methoxy-L-tryptophan and L-2-aminooctanedioic acid. L-Phenylalanine is the only proteinogenic amino acid directly used by apf1. The 3 other apf1 substrates are non-proteinogenic and have to be modified by other enzymes of the cluster. Lysine is converted to delta-1-pyrroline-5-carboxylate (P5C) which is reduced to L-pipecolic acid (L-pip) by apf3. L-pip is epimerized to D-pip, probably by apf1 activity, prior to incorporation. L-Tryptophan is N-oxidyzed by one of the cytochrome P450 monooxygenases (apf7 or apf8), and further methylated at the hydroxy group by the O-methyltransferase apf6 to yield N-methoxy-L-tryptophan. The synthesis of the fourth apf1 substrate is more complex. The fatty acid synthase apf5 is involved in the synthesis of the octanoic acid backbone of L-2-aminooctanedioic acid by fixing one acetyl-CoA unit and three malonyl-CoA units. Then one of the cytochrome P450 monooxygenases (apf7 or apf8) may oxidize this backbone to 2-oxooctanoic acid. The aminotransferase apf4 is predicted to catalyze the exchange of the keto group with an amino group. The next step would be the oxidation of 2-aminooctanoic acid by one of the cytochrome P450 monooxygenases (apf7 or apf8). The last step is the oxidation of 2-amino-8-hydroxyoctanoic acid to 2-aminooctanedioic acid is catalyzed by the FAD-dependent monooxygenase apf9. This chain is Fatty acid synthase apf5, found in Gibberella fujikuroi (strain CBS 195.34 / IMI 58289 / NRRL A-6831) (Bakanae and foot rot disease fungus).